The sequence spans 631 residues: 1-deoxy-D-xylulose-5-phosphate synthase (631 aa).

Residues His76 and 117–119 (AHS) each bind thiamine diphosphate. Asp148 provides a ligand contact to Mg(2+). Thiamine diphosphate contacts are provided by residues 149–150 (GA), Asn177, Tyr284, and Glu365. Residue Asn177 participates in Mg(2+) binding.

The protein belongs to the transketolase family. DXPS subfamily. As to quaternary structure, homodimer. Mg(2+) is required as a cofactor. The cofactor is thiamine diphosphate.

It catalyses the reaction D-glyceraldehyde 3-phosphate + pyruvate + H(+) = 1-deoxy-D-xylulose 5-phosphate + CO2. Its pathway is metabolic intermediate biosynthesis; 1-deoxy-D-xylulose 5-phosphate biosynthesis; 1-deoxy-D-xylulose 5-phosphate from D-glyceraldehyde 3-phosphate and pyruvate: step 1/1. In terms of biological role, catalyzes the acyloin condensation reaction between C atoms 2 and 3 of pyruvate and glyceraldehyde 3-phosphate to yield 1-deoxy-D-xylulose-5-phosphate (DXP). This is 1-deoxy-D-xylulose-5-phosphate synthase from Methylibium petroleiphilum (strain ATCC BAA-1232 / LMG 22953 / PM1).